Consider the following 636-residue polypeptide: Epsin-3 (636 aa).

6 residues coordinate a 1,2-diacyl-sn-glycero-3-phospho-(1D-myo-inositol-4,5-bisphosphate): R8, K11, R25, N30, R63, and H73. An ENTH domain is found at 12–144; that stretch reads NIVHNYSEAE…KDEERLRQER (133 aa). The disordered stretch occupies residues 153-503; that stretch reads RMALEGMGIG…TPESFLGPSA (351 aa). Positions 174–189 are enriched in low complexity; it reads GSPSSYTSASSSPRYA. Phosphoserine occurs at positions 184 and 185. UIM domains are found at residues 202-221 and 229-248; these read EEELQLQLALAMSREEAERP and DEDLQLQLALSLSRQEHEKG. Composition is skewed to basic and acidic residues over residues 214–231 and 242–256; these read SREEAERPVPPASHRDED and RQEHEKGVRSWKGDD. S257 carries the post-translational modification Phosphoserine. A compositionally biased stretch (basic and acidic residues) spans 270–288; sequence RQRDREPEREERKEEEKLK. 5 tandem repeats follow at residues 315–317, 338–340, 365–367, 381–383, and 398–400. A 5 X 3 AA repeats of [DE]-P-W region spans residues 315 to 400; the sequence is DPWDIPGLRP…KLPSTGADPW (86 aa). Basic and acidic residues predominate over residues 426-435; it reads ESTEPKESRD. 2 repeat units span residues 523–525 and 536–538. Residues 523-635 are 3 X 3 AA repeats of N-P-F; that stretch reads NPFLTGLGVP…LPPQAGTNPF (113 aa). A compositionally biased stretch (pro residues) spans 607 to 616; sequence PPPASLPQPL. The interval 607–636 is disordered; that stretch reads PPPASLPQPLLPTSGPMGPLPPQAGTNPFL. Repeat unit 3 spans residues 633–635; it reads NPF.

The protein belongs to the epsin family.

It is found in the cytoplasm. The protein localises to the cell cortex. It localises to the perinuclear region. The protein resides in the cytoplasmic vesicle. Its subcellular location is the clathrin-coated vesicle. The polypeptide is Epsin-3 (Epn3) (Mus musculus (Mouse)).